Reading from the N-terminus, the 321-residue chain is HPr kinase/phosphorylase (321 aa).

Residues His143 and Lys164 contribute to the active site. Residue 158–165 (GKSGVGKS) coordinates ATP. Ser165 provides a ligand contact to Mg(2+). Catalysis depends on Asp182, which acts as the Proton acceptor; for phosphorylation activity. Proton donor; for dephosphorylation activity. Residues 206–215 (MEIRGLGILN) are important for the catalytic mechanism of both phosphorylation and dephosphorylation. Position 207 (Glu207) interacts with Mg(2+). Residue Arg248 is part of the active site. The tract at residues 269 to 274 (PVRPGR) is important for the catalytic mechanism of dephosphorylation.

This sequence belongs to the HPrK/P family. Homohexamer. Requires Mg(2+) as cofactor.

It carries out the reaction [HPr protein]-L-serine + ATP = [HPr protein]-O-phospho-L-serine + ADP + H(+). It catalyses the reaction [HPr protein]-O-phospho-L-serine + phosphate + H(+) = [HPr protein]-L-serine + diphosphate. In terms of biological role, catalyzes the ATP- as well as the pyrophosphate-dependent phosphorylation of a specific serine residue in HPr, a phosphocarrier protein of the phosphoenolpyruvate-dependent sugar phosphotransferase system (PTS). HprK/P also catalyzes the pyrophosphate-producing, inorganic phosphate-dependent dephosphorylation (phosphorolysis) of seryl-phosphorylated HPr (P-Ser-HPr). The polypeptide is HPr kinase/phosphorylase (Leptospira interrogans serogroup Icterohaemorrhagiae serovar copenhageni (strain Fiocruz L1-130)).